Here is a 349-residue protein sequence, read N- to C-terminus: Flagellar P-ring protein (349 aa).

An N-terminal signal peptide occupies residues 1-20 (MSKAIKILLPLLLFSLSLQA).

This sequence belongs to the FlgI family. The basal body constitutes a major portion of the flagellar organelle and consists of four rings (L,P,S, and M) mounted on a central rod.

It is found in the periplasm. It localises to the bacterial flagellum basal body. Assembles around the rod to form the L-ring and probably protects the motor/basal body from shearing forces during rotation. The polypeptide is Flagellar P-ring protein (Wolinella succinogenes (strain ATCC 29543 / DSM 1740 / CCUG 13145 / JCM 31913 / LMG 7466 / NCTC 11488 / FDC 602W) (Vibrio succinogenes)).